Reading from the N-terminus, the 331-residue chain is MTSFITAVDNEEPTFNLTNSRLRLVSGTSNPKLAEEIASYLGIENVPLVSKRFADGELYVQIQQSIRGCDVFLIQPTCAPVNDSLMELMIMVDACKRASARQITAVIPYFGYARADRKTSGRESITAKLTANLLEKSGVDRVLAMDLHSAQIQGYFDIPCDHIYGSPVLIDYLESLKLEEVVVVSPDVGGVARARAFAKLMSDAPLAIIDKRRSAHNIAESLTVIGEVKGKTAILIDDMIDTGGTICSGANLLKKEGAKRIFACASHAVFSPPSYERLSSKDLFEQVIVTNSIPVIDNYEFPQLKVLSVANMLGEAIWRIHEESSVSSMFR.

55–57 (DGE) contacts ATP. His148 and Asp187 together coordinate Mg(2+). Lys211 is an active-site residue. Residues Arg213, Asp237, and 241 to 245 (DTGGT) each bind D-ribose 5-phosphate.

It belongs to the ribose-phosphate pyrophosphokinase family. Class I subfamily. As to quaternary structure, homohexamer. Mg(2+) serves as cofactor.

It is found in the cytoplasm. It catalyses the reaction D-ribose 5-phosphate + ATP = 5-phospho-alpha-D-ribose 1-diphosphate + AMP + H(+). It participates in metabolic intermediate biosynthesis; 5-phospho-alpha-D-ribose 1-diphosphate biosynthesis; 5-phospho-alpha-D-ribose 1-diphosphate from D-ribose 5-phosphate (route I): step 1/1. Involved in the biosynthesis of the central metabolite phospho-alpha-D-ribosyl-1-pyrophosphate (PRPP) via the transfer of pyrophosphoryl group from ATP to 1-hydroxyl of ribose-5-phosphate (Rib-5-P). This is Ribose-phosphate pyrophosphokinase from Prochlorococcus marinus subsp. pastoris (strain CCMP1986 / NIES-2087 / MED4).